Consider the following 195-residue polypeptide: Flagellar transcriptional regulator FlhC (195 aa).

Zn(2+) contacts are provided by Cys137, Cys140, Cys157, and Cys160. The interval 165–195 (RAGSARRKTTTRKAVAPTHKTTAASRKAVVA) is disordered.

This sequence belongs to the FlhC family. As to quaternary structure, heterohexamer composed of two FlhC and four FlhD subunits. Each FlhC binds a FlhD dimer, forming a heterotrimer, and a hexamer assembles by dimerization of two heterotrimers. The cofactor is Zn(2+).

It localises to the cytoplasm. Functions in complex with FlhD as a master transcriptional regulator that regulates transcription of several flagellar and non-flagellar operons by binding to their promoter region. Activates expression of class 2 flagellar genes, including fliA, which is a flagellum-specific sigma factor that turns on the class 3 genes. Also regulates genes whose products function in a variety of physiological pathways. In Thauera aminoaromatica, this protein is Flagellar transcriptional regulator FlhC.